The following is a 626-amino-acid chain: Colicin-Ia (626 aa).

A translocation (T) region spans residues 23–225 (EIMAVDIYVN…TRLSELEKNG (203 aa)). The span at 276-286 (QQLTQQKNTPD) shows a compositional bias: polar residues. Residues 276–308 (QQLTQQKNTPDGKTIVSPEKFPGRSSTNHSIVV) form a disordered region. Residues 282–385 (KNTPDGKTIV…LRQRLLDARN (104 aa)) are receptor-binding (R). A channel (C) region spans residues 450 to 626 (KDAINFTTEF…VEKANKFWGI (177 aa)). Helical transmembrane passes span 580–594 (ATAL…LTGS) and 597–612 (GIIG…GALI).

The protein belongs to the channel forming colicin family.

It localises to the cell membrane. In terms of biological role, this colicin is a channel-forming colicin. This class of transmembrane toxins depolarize the cytoplasmic membrane, leading to dissipation of cellular energy. Functionally, colicins are polypeptide toxins produced by and active against E.coli and closely related bacteria. The polypeptide is Colicin-Ia (cia) (Escherichia coli).